The chain runs to 125 residues: MRIAGVNLPLNKHAVIALTHVYGIGNTTAKTILKRAGIAPDRKISDLNDAEAHAIRELVAEEYKVEGQARGEQQLAIKRLMDIGCYRGLRHRRSLPVRGQNTQTNARTRKGKRKTVAGKKKAARK.

Positions 92-125 are disordered; sequence RRSLPVRGQNTQTNARTRKGKRKTVAGKKKAARK. Residues 107-125 show a composition bias toward basic residues; that stretch reads RTRKGKRKTVAGKKKAARK.

The protein belongs to the universal ribosomal protein uS13 family. Part of the 30S ribosomal subunit. Forms a loose heterodimer with protein S19. Forms two bridges to the 50S subunit in the 70S ribosome.

Located at the top of the head of the 30S subunit, it contacts several helices of the 16S rRNA. In the 70S ribosome it contacts the 23S rRNA (bridge B1a) and protein L5 of the 50S subunit (bridge B1b), connecting the 2 subunits; these bridges are implicated in subunit movement. Contacts the tRNAs in the A and P-sites. The polypeptide is Small ribosomal subunit protein uS13 (Chlorobium luteolum (strain DSM 273 / BCRC 81028 / 2530) (Pelodictyon luteolum)).